We begin with the raw amino-acid sequence, 379 residues long: Glutamate 5-kinase (379 aa).

Lys-17 contacts ATP. Substrate contacts are provided by Ser-57, Asp-144, and Asn-156. 176–177 provides a ligand contact to ATP; that stretch reads SD. Residues 282–359 form the PUA domain; sequence SGILMIDQGA…EEIESILGYE (78 aa).

It belongs to the glutamate 5-kinase family.

It is found in the cytoplasm. The catalysed reaction is L-glutamate + ATP = L-glutamyl 5-phosphate + ADP. It participates in amino-acid biosynthesis; L-proline biosynthesis; L-glutamate 5-semialdehyde from L-glutamate: step 1/2. Catalyzes the transfer of a phosphate group to glutamate to form L-glutamate 5-phosphate. This is Glutamate 5-kinase from Bartonella henselae (strain ATCC 49882 / DSM 28221 / CCUG 30454 / Houston 1) (Rochalimaea henselae).